The following is a 1379-amino-acid chain: DNA-directed RNA polymerase subunit beta'' (1379 aa).

The Zn(2+) site is built by Cys220, Cys293, Cys300, and Cys303.

This sequence belongs to the RNA polymerase beta' chain family. RpoC2 subfamily. As to quaternary structure, in plastids the minimal PEP RNA polymerase catalytic core is composed of four subunits: alpha, beta, beta', and beta''. When a (nuclear-encoded) sigma factor is associated with the core the holoenzyme is formed, which can initiate transcription. The cofactor is Zn(2+).

The protein localises to the plastid. It is found in the chloroplast. The enzyme catalyses RNA(n) + a ribonucleoside 5'-triphosphate = RNA(n+1) + diphosphate. Functionally, DNA-dependent RNA polymerase catalyzes the transcription of DNA into RNA using the four ribonucleoside triphosphates as substrates. In Crucihimalaya wallichii (Rock-cress), this protein is DNA-directed RNA polymerase subunit beta''.